The primary structure comprises 355 residues: Uroporphyrinogen decarboxylase (355 aa).

Substrate is bound by residues 27–31 (RQAGR), Asp-77, Tyr-154, Thr-209, and His-327.

This sequence belongs to the uroporphyrinogen decarboxylase family. Homodimer.

The protein resides in the cytoplasm. The catalysed reaction is uroporphyrinogen III + 4 H(+) = coproporphyrinogen III + 4 CO2. It functions in the pathway porphyrin-containing compound metabolism; protoporphyrin-IX biosynthesis; coproporphyrinogen-III from 5-aminolevulinate: step 4/4. In terms of biological role, catalyzes the decarboxylation of four acetate groups of uroporphyrinogen-III to yield coproporphyrinogen-III. The chain is Uroporphyrinogen decarboxylase from Erwinia tasmaniensis (strain DSM 17950 / CFBP 7177 / CIP 109463 / NCPPB 4357 / Et1/99).